A 1043-amino-acid polypeptide reads, in one-letter code: BAG family molecular chaperone regulator 6 (1043 aa).

Disordered stretches follow at residues 253–294 (KEEL…GKTV), 311–331 (DVKE…PYPI), 343–366 (VEAS…SDLH), 410–500 (NIPV…AESR), and 533–566 (SVES…KKSF). 4 stretches are compositionally biased toward basic and acidic residues: residues 311–324 (DVKE…KEEP), 343–357 (VEAS…EGRN), 416–443 (SENH…KKEQ), and 478–487 (KRMEKSKETK). Positions 534–543 (VESNSNLQEE) are enriched in polar residues. A compositionally biased stretch (basic and acidic residues) spans 550 to 566 (KPCEAKENREQPAKKSF). The 30-residue stretch at 568–597 (EEEAARIIQSMYRGYDVRRWEPIKKLKEIA) folds into the IQ domain. Positions 595-672 (EIATVREQMG…SIQDKLDSLK (78 aa)) constitute a BAG domain. The segment covering 724–741 (SPEEHPMSVLNRTDEKQA) has biased composition (basic and acidic residues). Disordered stretches follow at residues 724–749 (SPEE…ETEE), 764–799 (ATEN…GNGM), 817–975 (EPIN…ISKE), and 1015–1043 (EKKL…DAVL). The span at 840–852 (ASEVSEAETNSSE) shows a compositional bias: low complexity. Basic and acidic residues predominate over residues 853–871 (NENRKGEDDIVLHSEKNVE). 2 stretches are compositionally biased toward polar residues: residues 885 to 899 (QPLS…TREG) and 919 to 932 (SPNN…QTSE). Residues 934–951 (QDEKEQSPETEVIVKEQP) show a composition bias toward basic and acidic residues. Positions 971–1024 (GISKETKKLMEENQRFKETMETLVKAGREQLEVISKLTSRVKSLEKKLSHKKKT) form a coiled coil. Basic residues predominate over residues 1018–1031 (LSHKKKTQIRRRAS). A compositionally biased stretch (polar residues) spans 1034-1043 (MSVSPTDAVL).

Binds to the ATPase domain of HSP70/HSC70 chaperones. Interacts with calmodulins CAM1, CAM2, CAM3, CAM4, CAM6 and CAM7. Interacts with BAGP1 and APCB1. As to expression, detected in stems, leaves, flowers and roots.

In terms of biological role, co-chaperone that regulates diverse cellular pathways, such as programmed cell death and stress responses. Involved in plant basal resistance. Involved in basal heat response through the regulation of the heat induced small HSP (sHSP) transcriptional cascade. Functionally, induces autophagy. The polypeptide is BAG family molecular chaperone regulator 6 (Arabidopsis thaliana (Mouse-ear cress)).